The primary structure comprises 309 residues: Glutaminase (309 aa).

The substrate site is built by Ser-64, Asn-114, Glu-160, Asn-167, Tyr-191, Tyr-243, and Val-261.

Belongs to the glutaminase family. In terms of assembly, homotetramer.

The catalysed reaction is L-glutamine + H2O = L-glutamate + NH4(+). The protein is Glutaminase of Rhizobium rhizogenes (strain K84 / ATCC BAA-868) (Agrobacterium radiobacter).